The primary structure comprises 480 residues: MKRWWLNSMLFKKEFEHRCRLSKSTSSLGPIENASESKDPNINDTDKNIQSWGGHDNYSNVDLFFGVKDLRNLISDDTFLVKDSNGDIYSLYFDIENHIFEIDNDHPELESSFYRNSSYLNNGSKSKNPEHDPYMNDTQYTWNNHINSCIDSYLQSQICIDSYIVSGSDNSSNNYISSSICGESGNSSKNEDARTSDPIIRESSTDLDVTQKYRHLWVQCENCYGLNYKKFFKSKMNLCEQCGYHLKMSSSDRIELSIDPGTWEPMDEDMVSLDPIEFHSEEEPYKNRIDSYQRKTGLTEAVQTGIGQLDGINVAIAVMDFQFMGGSMGSVVGEKITRLIEYATKEFLPLIIVCASGGARMQEGSLSLMQMAKISSALYDYQSNKKLFYVPILTSPTTGGVTASFGMLGDIIIAEPNAYIAFAGKRVIEQTLNKTVPDGSQAAEYLFQKGLFDLIVPRNPLKSVLSELFQLHTFFPLNQN.

The tract at residues T25–N48 is disordered. The segment covering S35–K47 has biased composition (basic and acidic residues). One can recognise a CoA carboxyltransferase N-terminal domain in the interval L216 to N480. Residues C220, C223, C239, and C242 each contribute to the Zn(2+) site. The C4-type zinc finger occupies C220 to C242.

It belongs to the AccD/PCCB family. As to quaternary structure, acetyl-CoA carboxylase is a heterohexamer composed of biotin carboxyl carrier protein, biotin carboxylase and 2 subunits each of ACCase subunit alpha and ACCase plastid-coded subunit beta (accD). Zn(2+) is required as a cofactor.

It is found in the plastid. It localises to the chloroplast stroma. It catalyses the reaction N(6)-carboxybiotinyl-L-lysyl-[protein] + acetyl-CoA = N(6)-biotinyl-L-lysyl-[protein] + malonyl-CoA. Its pathway is lipid metabolism; malonyl-CoA biosynthesis; malonyl-CoA from acetyl-CoA: step 1/1. In terms of biological role, component of the acetyl coenzyme A carboxylase (ACC) complex. Biotin carboxylase (BC) catalyzes the carboxylation of biotin on its carrier protein (BCCP) and then the CO(2) group is transferred by the transcarboxylase to acetyl-CoA to form malonyl-CoA. The polypeptide is Acetyl-coenzyme A carboxylase carboxyl transferase subunit beta, chloroplastic (Helianthus annuus (Common sunflower)).